A 429-amino-acid polypeptide reads, in one-letter code: Small ribosomal subunit protein bS1 (429 aa).

4 S1 motif domains span residues 55–128, 144–211, 231–299, and 316–385; these read GDVV…LSKK, GDTV…SRKA, GEVV…LSIK, and GSVL…LSMK. Over residues 382-399 the composition is skewed to basic and acidic residues; sequence LSMKALEEKPEREDRRGN. A disordered region spans residues 382 to 412; the sequence is LSMKALEEKPEREDRRGNDGSASRADIAAYK.

It belongs to the bacterial ribosomal protein bS1 family.

Its function is as follows. Binds mRNA; thus facilitating recognition of the initiation point. It is needed to translate mRNA with a short Shine-Dalgarno (SD) purine-rich sequence. This Leuconostoc lactis protein is Small ribosomal subunit protein bS1 (rps1).